The following is a 239-amino-acid chain: Tetraspanin-9 (239 aa).

Helical transmembrane passes span 14 to 34 (FLFN…GIWL), 56 to 76 (LVIA…LGAI), and 86 to 106 (FFIV…LFFV). N-linked (GlcNAc...) asparagine glycans are attached at residues Asn-180 and Asn-181. Residues 204 to 224 (VLGTVGMCLLITQILGMAFSM) traverse the membrane as a helical segment.

Belongs to the tetraspanin (TM4SF) family. As to quaternary structure, found in a complex with GP6. In terms of processing, glycosylated.

It localises to the membrane. This is Tetraspanin-9 (TSPAN9) from Ovis aries (Sheep).